Here is an 87-residue protein sequence, read N- to C-terminus: U14-lycotoxin-Ls1b (87 aa).

Positions 1 to 20 (MNSKVFAVLLLLALSTCVLS) are cleaved as a signal peptide. The 46-residue stretch at 21–66 (EKYCPTPRNTSCKKMNIRNNCCRDSDCTSNAFCCAEPCGNFCHKAS) folds into the WAP domain. Cystine bridges form between Cys-24–Cys-54, Cys-32–Cys-58, Cys-41–Cys-53, Cys-42–Cys-80, and Cys-47–Cys-62.

This sequence belongs to the venom protein 11 family. 01 (wap-1) subfamily. In terms of processing, contains 5 disulfide bonds. Expressed by the venom gland.

The protein resides in the secreted. Its function is as follows. Has antibacterial activity. In Lycosa singoriensis (Wolf spider), this protein is U14-lycotoxin-Ls1b.